A 220-amino-acid chain; its full sequence is PKHD-type hydroxylase PCC7424_1929 (220 aa).

One can recognise a Fe2OG dioxygenase domain in the interval 77 to 173 (KIHSLLFSRY…RLVAVGWVQS (97 aa)). Fe cation contacts are provided by His95, Asp97, and His154. Arg164 is a binding site for 2-oxoglutarate.

The cofactor is Fe(2+). L-ascorbate serves as cofactor.

This is PKHD-type hydroxylase PCC7424_1929 from Gloeothece citriformis (strain PCC 7424) (Cyanothece sp. (strain PCC 7424)).